Reading from the N-terminus, the 56-residue chain is Ovomucoid (56 aa).

The region spanning 6 to 56 (VDCSEYPKPACTLEHRPLCGSDNKTYGNKCNFCNAVVESNGTLTLSHFGKC) is the Kazal-like domain. 3 disulfide bridges follow: C8-C38, C16-C35, and C24-C56. N45 carries N-linked (GlcNAc...) asparagine glycosylation.

The protein localises to the secreted. The protein is Ovomucoid of Pavo cristatus (Indian peafowl).